The primary structure comprises 373 residues: Flagellar P-ring protein (373 aa).

An N-terminal signal peptide occupies residues 1-26 (MKLFFRFLTLVAVLAMSLADVAPAWA).

The protein belongs to the FlgI family. The basal body constitutes a major portion of the flagellar organelle and consists of four rings (L,P,S, and M) mounted on a central rod.

It is found in the periplasm. The protein resides in the bacterial flagellum basal body. Assembles around the rod to form the L-ring and probably protects the motor/basal body from shearing forces during rotation. This Rhizobium leguminosarum bv. trifolii (strain WSM2304) protein is Flagellar P-ring protein.